The primary structure comprises 396 residues: Probable arginine kinase F46H5.3 (396 aa).

Residues 47–129 enclose the Phosphagen kinase N-terminal domain; that stretch reads KIEEGYAKLQ…FDPLIQDYHN (83 aa). A substrate-binding site is contributed by 102-106; that stretch reads GVGVY. In terms of domain architecture, Phosphagen kinase C-terminal spans 159 to 396; it reads FINSTRIRCG…AHLIALEKAA (238 aa). ATP-binding positions include 162 to 166 and histidine 226; that span reads STRIR. Glutamate 266 serves as a coordination point for substrate. ATP is bound at residue arginine 270. Cysteine 312 provides a ligand contact to substrate. Residues 321–325, 349–354, and aspartate 364 contribute to the ATP site; these read RASVH and RGIHGE. Glutamate 354 contacts substrate.

It belongs to the ATP:guanido phosphotransferase family.

It carries out the reaction L-arginine + ATP = N(omega)-phospho-L-arginine + ADP + H(+). The chain is Probable arginine kinase F46H5.3 from Caenorhabditis elegans.